Here is a 229-residue protein sequence, read N- to C-terminus: Large ribosomal subunit protein uL1 (229 aa).

This sequence belongs to the universal ribosomal protein uL1 family. In terms of assembly, part of the 50S ribosomal subunit.

Binds directly to 23S rRNA. The L1 stalk is quite mobile in the ribosome, and is involved in E site tRNA release. In terms of biological role, protein L1 is also a translational repressor protein, it controls the translation of the L11 operon by binding to its mRNA. This chain is Large ribosomal subunit protein uL1, found in Chlorobium phaeobacteroides (strain DSM 266 / SMG 266 / 2430).